The following is a 469-amino-acid chain: Glutamine synthetase (469 aa).

Residues 13-97 (HEVKFVDLRF…IRCDILEPGT (85 aa)) form the GS beta-grasp domain. One can recognise a GS catalytic domain in the interval 105–469 (PRSIAKRAED…PVEFELYYSV (365 aa)). Residues glutamate 130 and glutamate 132 each contribute to the Mg(2+) site. Glutamate 208 is a binding site for ATP. Mg(2+)-binding residues include glutamate 213 and glutamate 221. Residues 265-266 (NG) and glycine 266 contribute to the L-glutamate site. Histidine 270 provides a ligand contact to Mg(2+). ATP is bound by residues 272 to 274 (HMS) and serine 274. L-glutamate-binding residues include arginine 322, glutamate 328, and arginine 340. Residues arginine 340, arginine 345, and lysine 353 each contribute to the ATP site. Residue glutamate 358 coordinates Mg(2+). Arginine 360 is an L-glutamate binding site. The residue at position 398 (tyrosine 398) is an O-AMP-tyrosine.

Belongs to the glutamine synthetase family. In terms of assembly, oligomer of 12 subunits arranged in the form of two hexameric ring. Requires Mg(2+) as cofactor.

Its subcellular location is the cytoplasm. The enzyme catalyses L-glutamate + NH4(+) + ATP = L-glutamine + ADP + phosphate + H(+). Its activity is regulated as follows. The activity of this enzyme could be controlled by adenylation under conditions of abundant glutamine. Catalyzes the ATP-dependent biosynthesis of glutamine from glutamate and ammonia. The chain is Glutamine synthetase from Escherichia coli O157:H7.